We begin with the raw amino-acid sequence, 354 residues long: Fructose-bisphosphate aldolase (354 aa).

S50 lines the D-glyceraldehyde 3-phosphate pocket. D83 (proton donor) is an active-site residue. 4 residues coordinate Zn(2+): H84, D105, E142, and H198. A dihydroxyacetone phosphate-binding site is contributed by G199. H232 contacts Zn(2+). Residues 233–235 (GSS) and 275–278 (NIDT) contribute to the dihydroxyacetone phosphate site.

It belongs to the class II fructose-bisphosphate aldolase family. In terms of assembly, homodimer. Zn(2+) is required as a cofactor.

The catalysed reaction is beta-D-fructose 1,6-bisphosphate = D-glyceraldehyde 3-phosphate + dihydroxyacetone phosphate. The protein operates within carbohydrate biosynthesis; Calvin cycle. It functions in the pathway carbohydrate degradation; glycolysis; D-glyceraldehyde 3-phosphate and glycerone phosphate from D-glucose: step 4/4. With respect to regulation, activity is stimulated by Fe(2+) in autotrophically grown cells. Its function is as follows. Catalyzes the aldol condensation of dihydroxyacetone phosphate (DHAP or glycerone-phosphate) with glyceraldehyde 3-phosphate (G3P) to form fructose 1,6-bisphosphate (FBP) in gluconeogenesis and the reverse reaction in glycolysis. This Xanthobacter flavus protein is Fructose-bisphosphate aldolase.